Consider the following 447-residue polypeptide: Glutamine synthetase (447 aa).

The GS beta-grasp domain maps to 20–105; that stretch reads RDVKFIRTQF…ILGDVYLPDG (86 aa). The 336-residue stretch at 112 to 447 folds into the GS catalytic domain; the sequence is PRYVLKTAIK…WELSRYLSML (336 aa). Glu135 and Glu137 together coordinate Mg(2+). Glu187 contributes to the ATP binding site. The Mg(2+) site is built by Glu192 and Glu199. Residues 243 to 244 and Gly244 each bind L-glutamate; that span reads NG. Position 248 (His248) interacts with Mg(2+). An ATP-binding site is contributed by Ser252. Residues Arg301, Glu307, and Arg319 each coordinate L-glutamate. Residues Arg319 and Arg324 each contribute to the ATP site. Glu336 is a binding site for Mg(2+). Residue Arg338 participates in L-glutamate binding.

This sequence belongs to the glutamine synthetase family. In terms of assembly, homohexamer. Interacts and forms stable complexes with the regulatory protein GlnK1. Mg(2+) serves as cofactor.

It localises to the cytoplasm. The catalysed reaction is L-glutamate + NH4(+) + ATP = L-glutamine + ADP + phosphate + H(+). Its activity is regulated as follows. Directly stimulated by the effector molecule 2-oxoglutarate. Inhibited by GlnK1. 2-oxoglutarate antagonizes the inhibitory effects of GlnK1, but does not prevent GlnK1/GlnA1 complex formation. In terms of biological role, probably involved in nitrogen metabolism via ammonium assimilation. Catalyzes the ATP-dependent biosynthesis of glutamine from glutamate and ammonia. The protein is Glutamine synthetase of Methanosarcina mazei (strain ATCC BAA-159 / DSM 3647 / Goe1 / Go1 / JCM 11833 / OCM 88) (Methanosarcina frisia).